The primary structure comprises 270 residues: Undecaprenyl-diphosphatase 1 (270 aa).

The next 6 membrane-spanning stretches (helical) occupy residues 41–61, 88–108, 117–137, 192–212, 218–238, and 250–270; these read IEGFSFELLMNAGSLIAVLLV, FRFIIYLIIATIPAGVIGVLF, KDGVRITAVTLLITGLALFLI, FSFLLYIPVSLGGTILSITDI, LGELFLPYLFAFIASVIATYF, and GNLVYFSIYCFVIGIAVLIFA.

It belongs to the UppP family.

The protein localises to the cell membrane. It carries out the reaction di-trans,octa-cis-undecaprenyl diphosphate + H2O = di-trans,octa-cis-undecaprenyl phosphate + phosphate + H(+). In terms of biological role, catalyzes the dephosphorylation of undecaprenyl diphosphate (UPP). Confers resistance to bacitracin. The sequence is that of Undecaprenyl-diphosphatase 1 from Bacillus licheniformis (strain ATCC 14580 / DSM 13 / JCM 2505 / CCUG 7422 / NBRC 12200 / NCIMB 9375 / NCTC 10341 / NRRL NRS-1264 / Gibson 46).